The primary structure comprises 125 residues: Ribosome-binding factor A (125 aa).

Belongs to the RbfA family. Monomer. Binds 30S ribosomal subunits, but not 50S ribosomal subunits or 70S ribosomes.

The protein localises to the cytoplasm. In terms of biological role, one of several proteins that assist in the late maturation steps of the functional core of the 30S ribosomal subunit. Associates with free 30S ribosomal subunits (but not with 30S subunits that are part of 70S ribosomes or polysomes). Required for efficient processing of 16S rRNA. May interact with the 5'-terminal helix region of 16S rRNA. This is Ribosome-binding factor A from Xylella fastidiosa (strain M23).